The following is a 287-amino-acid chain: Large ribosomal subunit protein uL2 (287 aa).

The disordered stretch occupies residues 221–287; it reads RGSVMNPCDH…SKRSRGGRDS (67 aa). Positions 258–287 are enriched in basic residues; sequence KTRKKNKPSNKLVVRRRRRISKRSRGGRDS.

Belongs to the universal ribosomal protein uL2 family. In terms of assembly, part of the 50S ribosomal subunit. Forms a bridge to the 30S subunit in the 70S ribosome.

In terms of biological role, one of the primary rRNA binding proteins. Required for association of the 30S and 50S subunits to form the 70S ribosome, for tRNA binding and peptide bond formation. It has been suggested to have peptidyltransferase activity; this is somewhat controversial. Makes several contacts with the 16S rRNA in the 70S ribosome. In Prochlorococcus marinus subsp. pastoris (strain CCMP1986 / NIES-2087 / MED4), this protein is Large ribosomal subunit protein uL2.